The following is a 398-amino-acid chain: 1-deoxy-D-xylulose 5-phosphate reductoisomerase (398 aa).

NADPH contacts are provided by T10, G11, S12, I13, N38, and N124. K125 contacts 1-deoxy-D-xylulose 5-phosphate. E126 contacts NADPH. D150 contacts Mn(2+). Residues S151, E152, S186, and H209 each coordinate 1-deoxy-D-xylulose 5-phosphate. E152 provides a ligand contact to Mn(2+). G215 serves as a coordination point for NADPH. 4 residues coordinate 1-deoxy-D-xylulose 5-phosphate: S222, N227, K228, and E231. E231 provides a ligand contact to Mn(2+).

It belongs to the DXR family. Mg(2+) serves as cofactor. The cofactor is Mn(2+).

The catalysed reaction is 2-C-methyl-D-erythritol 4-phosphate + NADP(+) = 1-deoxy-D-xylulose 5-phosphate + NADPH + H(+). The protein operates within isoprenoid biosynthesis; isopentenyl diphosphate biosynthesis via DXP pathway; isopentenyl diphosphate from 1-deoxy-D-xylulose 5-phosphate: step 1/6. Catalyzes the NADPH-dependent rearrangement and reduction of 1-deoxy-D-xylulose-5-phosphate (DXP) to 2-C-methyl-D-erythritol 4-phosphate (MEP). The protein is 1-deoxy-D-xylulose 5-phosphate reductoisomerase of Baumannia cicadellinicola subsp. Homalodisca coagulata.